We begin with the raw amino-acid sequence, 800 residues long: MSLVYLLIAILVIMAMILLMSKRRALAKYAGYIALVAPVISSIYFLIQIPSVAKLQYLSTSIPWIKTLDINLDLRLDGLSLMFSLIISLIGIAVFFYATQYLSSRKDNLPRFYFYLTLFMFSMIGIVLSDNTILMYIFWELTSVSSFLLISYWYNNGDSQFGAIQSFMITVFGGLALLVGFIMLYIMTGTNNITDILGQADHIKNHGLFIPMIFMFLLGAFTKSAQFPFHIWLPRAMAAPTPVSAYLHSATMVKAGIFLLLRFTPLLGLSNMYIYIVTFVGLITMLFGSITALKQWDLKGILAYSTISQLGMIMAMVGIGGGYAQHQQDAIASIYVFVLFGALFHLMNHAIFKCALFMGVGILDHEAGSRDIRILSGMRQLFPKMNLVMTIAALSMAGVPFLNGFLSKEMFLDALTQTGQLSQFSLISMIAIVFVGVIASIFTFTYALYMVKEVFWTKYDSKVFTKKNIHEPWLFSLPSLILMVLVPVIFFVPNIFGKGIIVPALRGVSGGNHQIDPLAPHVSQWHGFNIPLLLTIIIILLGSVLAIKVDWKKVFTGKIRQISVSKGYEMVYRHFEKFATKRFKRVMQDRLNQYIIMTLGIFMIIIGYGYIRIGLPKVHQLHVSEFGALEIILAIVTVTIGISLIFIRQRLTMVILNGVIGFVVTLFFIAMKAPDLALTQLVVETITTILFIVSFSRLPNVPRSNANKKREIIKISVSLLMALIVVSLIFITQQTDGLSSISDFYLKADKLTGGKNIVNAILGDFRALDTLFEGLVLIITGLGIYTLLNYQDRRGQDERE.

The next 20 membrane-spanning stretches (helical) occupy residues Met-1–Ser-21, Ile-33–Ala-53, Gly-78–Ala-98, Leu-118–Phe-138, Phe-167–Met-187, Gly-207–Phe-227, Thr-241–Leu-261, Tyr-273–Leu-293, Gly-300–Gly-320, Ile-331–Ile-351, Leu-387–Ser-407, Phe-424–Phe-444, Pro-472–Val-492, Gly-527–Ile-547, Ile-595–Leu-615, Gly-627–Ile-647, Leu-651–Met-671, Leu-676–Ser-696, Ile-712–Thr-732, and Leu-768–Leu-788.

It belongs to the CPA3 antiporters (TC 2.A.63) subunit A family. In terms of assembly, may form a heterooligomeric complex that consists of seven subunits: mnhA2, mnhB2, mnhC2, mnhD2, mnhE2, mnhF2 and mnhG2.

It localises to the cell membrane. In Staphylococcus aureus (strain Mu3 / ATCC 700698), this protein is Putative antiporter subunit mnhA2 (mnhA2).